The chain runs to 260 residues: Hemin import ATP-binding protein HmuV (260 aa).

Residues 6-242 form the ABC transporter domain; sequence LSGRNISMKY…ERIEQVYGYR (237 aa). 38-45 lines the ATP pocket; it reads GPNGAGKS.

It belongs to the ABC transporter superfamily. Heme (hemin) importer (TC 3.A.1.14.5) family. In terms of assembly, the complex is composed of two ATP-binding proteins (HmuV), two transmembrane proteins (HmuU) and a solute-binding protein (HmuT).

It is found in the cell inner membrane. Its function is as follows. Part of the ABC transporter complex HmuTUV involved in hemin import. Responsible for energy coupling to the transport system. The protein is Hemin import ATP-binding protein HmuV of Vibrio parahaemolyticus serotype O3:K6 (strain RIMD 2210633).